The sequence spans 200 residues: MNKFTQHTGIPVPLDAANVDTDAIIPKQFLQKVTRTGFGKHLFHDWRFLDDEGTQPNPSFILNQPIYQDASILLARENFGCGSSREHAPWALTDYGFHAVIAPSFADIFYGNSFNNQLLPIKLSDEQVTQLFNWVTEHAGTPITVDLVAQQVIAGELCFSFEIDAFRRHCMIEGLDSIGLTLQHQAEISAYEAKQPAFMR.

Belongs to the LeuD family. LeuD type 1 subfamily. Heterodimer of LeuC and LeuD.

It carries out the reaction (2R,3S)-3-isopropylmalate = (2S)-2-isopropylmalate. The protein operates within amino-acid biosynthesis; L-leucine biosynthesis; L-leucine from 3-methyl-2-oxobutanoate: step 2/4. Functionally, catalyzes the isomerization between 2-isopropylmalate and 3-isopropylmalate, via the formation of 2-isopropylmaleate. This is 3-isopropylmalate dehydratase small subunit from Proteus mirabilis (strain HI4320).